A 336-amino-acid chain; its full sequence is L-Ala-D/L-amino acid epimerase (336 aa).

Residues threonine 130 and 152 to 154 (KIK) contribute to the substrate site. Mg(2+) contacts are provided by aspartate 178, glutamate 204, and aspartate 229. Substrate-binding positions include lysine 251 and 301 to 303 (DMD).

The protein belongs to the mandelate racemase/muconate lactonizing enzyme family. Mg(2+) is required as a cofactor.

Catalyzes the epimerization of D-Ala-D-Ala to D-Ala-L-Ala. Has broad substrate specificity and catalyzes the epimerization of a variety of dipeptides containing an N-terminal Ala followed by Ser, Thr, Val, Met, His, Phe or Trp (in vitro). The polypeptide is L-Ala-D/L-amino acid epimerase (Flavobacterium johnsoniae (strain ATCC 17061 / DSM 2064 / JCM 8514 / BCRC 14874 / CCUG 350202 / NBRC 14942 / NCIMB 11054 / UW101) (Cytophaga johnsonae)).